The chain runs to 385 residues: Trans-enoyl reductase poxH (385 aa).

NADP(+) is bound at residue 64–67 (QPYS). 156 to 163 (PDPAAPPI) contacts substrate. NADP(+)-binding positions include 199 to 202 (STSV), 223 to 226 (SGTD), Tyr241, and 289 to 290 (LG). 309–313 (HMAPL) contributes to the substrate binding site. 372–373 (KR) is an NADP(+) binding site.

Belongs to the zinc-containing alcohol dehydrogenase family. As to quaternary structure, monomer.

Its pathway is secondary metabolite biosynthesis. In terms of biological role, trans-enoyl reductase; part of the gene cluster that mediates the biosynthesis of oxaleimides, cytotoxic compounds containing an unusual disubstituted succinimide moiety. The first step of the pathway is provided by the HR-PKS poxF that serves in a new mode of collaborative biosynthesis with the PKS-NRPS poxE, by providing the olefin containing amino acid substrate via the synthesis of an ACP-bound dec-4-enoate. The cytochrome P450 monooxygenase poxM-catalyzed oxidation at the alpha-position creates the enzyme-bound 2-hydroxydec-4-enoyl-ACP thioester, which may be prone to spontaneous hydrolysis to yield 2-hydroxydec-4-enoic acid due to increased electrophilicity of the carbonyl. 2-hydroxydec-4-enoic acid can then be further oxidized by poxM to yield the alpha-ketoacid 2-oxodec-4-enoicacid, which is reductively aminated by the aminotransferase poxL to yield (S,E)-2-aminodec-4-enoic acid. The Hybrid PKS-NRPS synthetase poxE then performs condensation between the octaketide product of its PKS modules and the amino group of (S,E)-2-aminodec-4-enoic acid which is activated and incorporated by the adenylation domain. The resulting aminoacyl product can be cyclized by the Diels-Alderase PoxQ and reductively released by the reductive (R) domain of poxE to yield an aldehyde intermediate. The released aldehyde is then substrate for a Knoevenagel condensation by the hydrolyase poxO followed by an oxidation at the 5-position of the pyrrolidone ring. The presence of the olefin from the amino acid building block allows for migration of the substituted allyl group to occur. This allylic transposition reaction takes place in a conjugate addition, semipinacol-like fashion to yield a succinimide intermediate. Iterative two-electron oxidations of the C7 methyl of the succinimide intermediate to the carboxylic acid can be catalyzed by one of two remaining cytochrome P450 monooxygenasess poxC or poxD to yield oxaleimide A. Subsequent oxidation yields the maleimide scaffold oxaleimide I. Both oxaleimide A and oxaleimide I can undergo oxidative modifications in the decalin ring to yield the series of products oxaleimides B to H. This Penicillium oxalicum protein is Trans-enoyl reductase poxH.